We begin with the raw amino-acid sequence, 307 residues long: ATP-dependent (S)-NAD(P)H-hydrate dehydratase (307 aa).

Residues 1–291 (MDHFIKLLPK…DEIPKLVRDV (291 aa)) enclose the YjeF C-terminal domain. Residues glycine 96 and 150–156 (NIVEFSR) each bind (6S)-NADPHX. ATP contacts are provided by residues 194 to 198 (KGEVD) and 214 to 223 (SSLRRCGGQG). Aspartate 224 contacts (6S)-NADPHX.

The protein belongs to the NnrD/CARKD family. Mg(2+) serves as cofactor.

It catalyses the reaction (6S)-NADHX + ATP = ADP + phosphate + NADH + H(+). The catalysed reaction is (6S)-NADPHX + ATP = ADP + phosphate + NADPH + H(+). Catalyzes the dehydration of the S-form of NAD(P)HX at the expense of ATP, which is converted to ADP. Together with NAD(P)HX epimerase, which catalyzes the epimerization of the S- and R-forms, the enzyme allows the repair of both epimers of NAD(P)HX, a damaged form of NAD(P)H that is a result of enzymatic or heat-dependent hydration. The polypeptide is ATP-dependent (S)-NAD(P)H-hydrate dehydratase (Caenorhabditis elegans).